Consider the following 420-residue polypeptide: Serine hydroxymethyltransferase (420 aa).

(6S)-5,6,7,8-tetrahydrofolate contacts are provided by residues leucine 121 and 125–127 (GHL). Lysine 230 bears the N6-(pyridoxal phosphate)lysine mark. 354–356 (SPF) provides a ligand contact to (6S)-5,6,7,8-tetrahydrofolate.

It belongs to the SHMT family. In terms of assembly, homodimer. Pyridoxal 5'-phosphate is required as a cofactor.

It is found in the cytoplasm. It carries out the reaction (6R)-5,10-methylene-5,6,7,8-tetrahydrofolate + glycine + H2O = (6S)-5,6,7,8-tetrahydrofolate + L-serine. Its pathway is one-carbon metabolism; tetrahydrofolate interconversion. It functions in the pathway amino-acid biosynthesis; glycine biosynthesis; glycine from L-serine: step 1/1. Catalyzes the reversible interconversion of serine and glycine with tetrahydrofolate (THF) serving as the one-carbon carrier. This reaction serves as the major source of one-carbon groups required for the biosynthesis of purines, thymidylate, methionine, and other important biomolecules. Also exhibits THF-independent aldolase activity toward beta-hydroxyamino acids, producing glycine and aldehydes, via a retro-aldol mechanism. The chain is Serine hydroxymethyltransferase from Rickettsia africae (strain ESF-5).